The following is a 324-amino-acid chain: uncharacterized protein (324 aa).

It belongs to the mgp1/MG371 family.

This is an uncharacterized protein from Mycoplasma genitalium (strain ATCC 33530 / DSM 19775 / NCTC 10195 / G37) (Mycoplasmoides genitalium).